Reading from the N-terminus, the 1250-residue chain is DNA excision repair protein ERCC-6-like (1250 aa).

Ser-14 is subject to Phosphoserine. One copy of the TPR 1 repeat lies at 21 to 54; the sequence is YLRYVKEAKEATKNGDLEEAFKLFNLAKDIFPNE. Residues 109-277 form the Helicase ATP-binding domain; the sequence is SLYRDGRKGG…WSLFDFACQG (169 aa). ATP is bound at residue 122–129; it reads DDMGLGKT. The DEAH box motif lies at 228 to 231; it reads DEAH. Residues 464-620 enclose the Helicase C-terminal domain; sequence FLMDLLKRLR…EKKNPFRYFS (157 aa). The interval 735–768 is disordered; the sequence is VFPSSTKKKCPKLNKPQPQPSPLLSTHHTQEEDI. A phosphoserine mark is found at Ser-755, Ser-774, Ser-807, and Ser-810. The residue at position 813 (Thr-813) is a Phosphothreonine. Ser-820 is modified (phosphoserine). The tract at residues 926–946 is disordered; it reads SALQDAQASEAKLEEEPSASS. Residues Ser-969, Ser-971, Ser-995, Ser-1004, and Ser-1028 each carry the phosphoserine modification. Residues 1061–1092 are disordered; it reads ASTPKNDISPPGRFFSSQIPSSVNKSMNSRRS. Thr-1063 carries the phosphothreonine; by PLK1 modification. Ser-1069 is modified (phosphoserine). Polar residues predominate over residues 1075 to 1087; the sequence is FSSQIPSSVNKSM. Phosphoserine is present on residues Ser-1098 and Ser-1118. The tract at residues 1110–1199 is disordered; sequence MEERLDDSSE…QDKAAEATND (90 aa). Basic and acidic residues predominate over residues 1115–1124; sequence DDSSEAKGPE. The span at 1125 to 1135 shows a compositional bias: acidic residues; the sequence is DYPEEGVEESS. Polar residues predominate over residues 1149-1173; the sequence is ETLSSENKSSWLMTSKPSALAQETS. 2 positions are modified to phosphoserine: Ser-1181 and Ser-1188. The TPR 2 repeat unit spans residues 1200–1233; that stretch reads YETLVKRGKELKECGKIQEALNCLVKALDIKSAD.

This sequence belongs to the SNF2/RAD54 helicase family. Interacts with PLK1, which phosphorylates it. Both proteins are mutually dependent on each other for correct subcellular localization. Interacts (via N-terminal TPR repeat) with BEND3 (via BEN domains 1 and 3); the interaction is direct. In terms of processing, phosphorylation by PLK1 prevents the association with chromosome arms and restricts its localization to the kinetochore-centromere region.

The protein resides in the chromosome. It is found in the centromere. Its subcellular location is the kinetochore. It catalyses the reaction ATP + H2O = ADP + phosphate + H(+). DNA helicase that acts as a tension sensor that associates with catenated DNA which is stretched under tension until it is resolved during anaphase. Functions as ATP-dependent DNA translocase. Can promote Holliday junction branch migration (in vitro). This Homo sapiens (Human) protein is DNA excision repair protein ERCC-6-like (ERCC6L).